The following is a 512-amino-acid chain: Choline-sulfatase (512 aa).

Aspartate 14, glutamine 15, and cysteine 54 together coordinate Ca(2+). The Nucleophile role is filled by cysteine 54. Residue cysteine 54 is modified to 3-oxoalanine (Cys). The active site involves histidine 104. 2 residues coordinate Ca(2+): aspartate 296 and histidine 297.

It belongs to the sulfatase family. Ca(2+) serves as cofactor. In terms of processing, the conversion to 3-oxoalanine (also known as C-formylglycine, FGly), of a serine or cysteine residue in prokaryotes and of a cysteine residue in eukaryotes, is critical for catalytic activity.

The catalysed reaction is choline sulfate + H2O = choline + sulfate + H(+). The protein operates within amine and polyamine biosynthesis; choline biosynthesis; choline from choline sulfate: step 1/1. In terms of biological role, converts choline-O-sulfate into choline. This chain is Choline-sulfatase (betC), found in Rhizobium meliloti (strain 1021) (Ensifer meliloti).